The primary structure comprises 521 residues: MASLFHLRFLKPLSCLQAGLLYSLIFGVLYHFPLFVYVYKESNQVSFIAMMVVVLFCVNGALFLALGLISASLMRWSAIVFSLLNSVAFYFISAYKVFLNKSMMGNVLNTNTHEVLGFLSVKLFVFIVVFGVLPGYVIYKIPLKNSSKKAPFLAILALVFIFIASALANTKNWLWFDKHAKFIGGLILPFAYSVNAFRVSALKFFAPTIKPLPLFSPNHSHSFVVLVIGESARKHNYALYGYQKPTTPRLSKRLADNELTLFNATSCATYTTASLECILDSSFKNNAYENLPTYLTKAGIKVFWYSANDGEKNVKVTSYLKNYELIQKCPNCEAIAPYDESLLYNLPDLLKEHSNENVLLILHLAGSHGPNYDNKVPLNFRVFKPYCSSADLSSCSKESLINAYDNTIFYNDYLLDKIISMLENAKQPALMIYLSDHGESLGEEAFYLHGIPKSIAPKEQYEIPFIVYANEPFKEKHSIIQTQTPINQNVIFHSVLGVFLDFKNPSVVYRPSLDLLKHKKE.

6 consecutive transmembrane segments (helical) span residues 18-38, 47-67, 79-99, 118-138, 150-170, and 182-202; these read AGLL…FVYV, FIAM…LALG, IVFS…KVFL, FLSV…GYVI, APFL…LANT, and FIGG…VSAL.

The protein belongs to the phosphoethanolamine transferase family. EptA subfamily.

It localises to the cell inner membrane. It functions in the pathway bacterial outer membrane biogenesis; LPS lipid A biosynthesis. Its function is as follows. Probably catalyzes the addition of a phosphoethanolamine moiety to the dephosphorylated 1-position of the disaccharide backbone of lipid A. Lipid A that is 1-phosphorylated is not a substrate for this enzyme. The polypeptide is Phosphoethanolamine transferase EptA (Helicobacter pylori (strain ATCC 700392 / 26695) (Campylobacter pylori)).